The primary structure comprises 177 residues: MKQSLTLVFLVAIGYATAYTTSHDYSGGYGGGCYGSDCDSGYGDSGYGGGCTGGDCGGGYGGGYGGGCSGGDCGNYGGGYGGDCNGGDCGNYGGGYGGGNGGGCSGGNCGGGFDEAFPAPYGGDYGNGGNGFGKGGSKGNNYGKGYGGGSGKGKGGGKGGKGGKGGTYKPSHYGGGY.

A signal peptide spans 1 to 18 (MKQSLTLVFLVAIGYATA). 5 repeat units span residues 25–41 (YSGGYGGGCYGSDCDSG), 42–59 (YGDSGYGGGCTGGDCGGG), 60–75 (YGGGYGGGCSGGDCGN), 76–91 (YGGGYGGDCNGGDCGN), and 92–112 (YGGGYGGGNGGGCSGGNCGGG). The segment at 25-112 (YSGGYGGGCY…GCSGGNCGGG (88 aa)) is 5 X approximate tandem repeats. A compositionally biased stretch (gly residues) spans 149–166 (GSGKGKGGGKGGKGGKGG). Residues 149-177 (GSGKGKGGGKGGKGGKGGTYKPSHYGGGY) form a disordered region.

The chain is Eggshell protein (F10) from Schistosoma mansoni (Blood fluke).